We begin with the raw amino-acid sequence, 172 residues long: MNRAEKREFVTWLNEAFQKSGSVVVAHYSGLTVSQMNDLRSKMGEAGGAVKVAKNRLAKIALQGTESESIAGLFTGQTLIAYSEDPITAPKVAVDFAKSNDKFVILGGSMGATSLTVDAVKSLASLPSLNELRAKLVGMISTPATRIAQVVNAPAGQVARVIGAYAQEDKAA.

This sequence belongs to the universal ribosomal protein uL10 family. In terms of assembly, part of the ribosomal stalk of the 50S ribosomal subunit. The N-terminus interacts with L11 and the large rRNA to form the base of the stalk. The C-terminus forms an elongated spine to which L12 dimers bind in a sequential fashion forming a multimeric L10(L12)X complex.

Its function is as follows. Forms part of the ribosomal stalk, playing a central role in the interaction of the ribosome with GTP-bound translation factors. This chain is Large ribosomal subunit protein uL10, found in Bartonella tribocorum (strain CIP 105476 / IBS 506).